The primary structure comprises 525 residues: Cytochrome P450 714A2 (525 aa).

At 1 to 3 (MES) the chain is on the lumenal side. A helical; Signal-anchor for type III membrane protein membrane pass occupies residues 4–24 (LVVHTVNAIWCIVIVGIFSVG). The Cytoplasmic segment spans residues 25–525 (YHVYGRAVVE…PQHGVVIRVV (501 aa)). C475 provides a ligand contact to heme.

The protein belongs to the cytochrome P450 family. Heme serves as cofactor. Expressed in the shoot apical meristem (SAM) and petioles of young leaves, in the leaf margin and petiole vein of cotyledons, and at low levels in the filaments of developing flowers. Not detected in siliques.

Its subcellular location is the endoplasmic reticulum membrane. Involved in the inactivation of early gibberellin (GA) intermediates. The protein is Cytochrome P450 714A2 (CYP714A2) of Arabidopsis thaliana (Mouse-ear cress).